An 869-amino-acid polypeptide reads, in one-letter code: Eukaryotic translation initiation factor 3 subunit C (869 aa).

Disordered stretches follow at residues 1-92 (MSRF…KSAK) and 182-242 (IKKA…VGKG). A compositionally biased stretch (acidic residues) spans 14–55 (SSDEEEDLYSDDEEVQEQPEEESSEDDSEEDDDDDDDSDSSS). The span at 185–203 (ASKEHQKDIDSFRADKDAY) shows a compositional bias: basic and acidic residues. Positions 607-781 (FHMHINLELL…SSIIFRKGVE (175 aa)) constitute a PCI domain. The disordered stretch occupies residues 803–869 (NERTLETRTQ…ALGAAVGSRA (67 aa)). Positions 823–843 (GRGGRGGNRGGRGGGRGGRGG) are enriched in gly residues.

This sequence belongs to the eIF-3 subunit C family. In terms of assembly, component of the eukaryotic translation initiation factor 3 (eIF-3) complex.

The protein localises to the cytoplasm. Functionally, component of the eukaryotic translation initiation factor 3 (eIF-3) complex, which is involved in protein synthesis of a specialized repertoire of mRNAs and, together with other initiation factors, stimulates binding of mRNA and methionyl-tRNAi to the 40S ribosome. The eIF-3 complex specifically targets and initiates translation of a subset of mRNAs involved in cell proliferation. This Botryotinia fuckeliana (strain B05.10) (Noble rot fungus) protein is Eukaryotic translation initiation factor 3 subunit C (nip1).